A 211-amino-acid chain; its full sequence is Ribosomal RNA small subunit methyltransferase G (211 aa).

Residues Gly76, Leu81, 127–128 (VE), and Arg142 contribute to the S-adenosyl-L-methionine site.

Belongs to the methyltransferase superfamily. RNA methyltransferase RsmG family.

The protein localises to the cytoplasm. It carries out the reaction guanosine(527) in 16S rRNA + S-adenosyl-L-methionine = N(7)-methylguanosine(527) in 16S rRNA + S-adenosyl-L-homocysteine. Functionally, specifically methylates the N7 position of guanine in position 527 of 16S rRNA. This chain is Ribosomal RNA small subunit methyltransferase G, found in Vibrio vulnificus (strain CMCP6).